The chain runs to 145 residues: MIALIQRVSSASVTVEGNIIGEIDKGLLILLGVEQGDDEQKATRLCERVLGYRIFADDDGKMNLNVRQAGGNVLVVSQFTLVADTQRGMRPGFSRGADPSEADRLYQYFVEQCREQGVHTETGQFAADMKVALVNDGPVTFWLQT.

The Gly-cisPro motif, important for rejection of L-amino acids signature appears at G137–P138.

The protein belongs to the DTD family. As to quaternary structure, homodimer.

The protein resides in the cytoplasm. It catalyses the reaction glycyl-tRNA(Ala) + H2O = tRNA(Ala) + glycine + H(+). The enzyme catalyses a D-aminoacyl-tRNA + H2O = a tRNA + a D-alpha-amino acid + H(+). Functionally, an aminoacyl-tRNA editing enzyme that deacylates mischarged D-aminoacyl-tRNAs. Also deacylates mischarged glycyl-tRNA(Ala), protecting cells against glycine mischarging by AlaRS. Acts via tRNA-based rather than protein-based catalysis; rejects L-amino acids rather than detecting D-amino acids in the active site. By recycling D-aminoacyl-tRNA to D-amino acids and free tRNA molecules, this enzyme counteracts the toxicity associated with the formation of D-aminoacyl-tRNA entities in vivo and helps enforce protein L-homochirality. The polypeptide is D-aminoacyl-tRNA deacylase (Pectobacterium atrosepticum (strain SCRI 1043 / ATCC BAA-672) (Erwinia carotovora subsp. atroseptica)).